A 906-amino-acid chain; its full sequence is Protein translocase subunit SecA (906 aa).

Residues Q87, 105–109 (GEGKT), and D512 each bind ATP. The tract at residues 875–897 (VTFVRDEQKVGRNDPCPCGSGKK) is disordered. C890, C892, C901, and H902 together coordinate Zn(2+).

Belongs to the SecA family. In terms of assembly, monomer and homodimer. Part of the essential Sec protein translocation apparatus which comprises SecA, SecYEG and auxiliary proteins SecDF-YajC and YidC. The cofactor is Zn(2+).

Its subcellular location is the cell inner membrane. The protein localises to the cytoplasm. The enzyme catalyses ATP + H2O + cellular proteinSide 1 = ADP + phosphate + cellular proteinSide 2.. Part of the Sec protein translocase complex. Interacts with the SecYEG preprotein conducting channel. Has a central role in coupling the hydrolysis of ATP to the transfer of proteins into and across the cell membrane, serving both as a receptor for the preprotein-SecB complex and as an ATP-driven molecular motor driving the stepwise translocation of polypeptide chains across the membrane. The protein is Protein translocase subunit SecA of Aeromonas hydrophila subsp. hydrophila (strain ATCC 7966 / DSM 30187 / BCRC 13018 / CCUG 14551 / JCM 1027 / KCTC 2358 / NCIMB 9240 / NCTC 8049).